Here is a 192-residue protein sequence, read N- to C-terminus: Adenylate kinase (192 aa).

ATP is bound at residue 10-18; that stretch reads GVPGVGGTT.

It belongs to the archaeal adenylate kinase family. As to quaternary structure, monomer.

It localises to the cytoplasm. It carries out the reaction AMP + ATP = 2 ADP. The polypeptide is Adenylate kinase (Methanococcus maripaludis (strain C6 / ATCC BAA-1332)).